The sequence spans 343 residues: N-acetyl-gamma-glutamyl-phosphate reductase (343 aa).

Residue C147 is part of the active site.

The protein belongs to the NAGSA dehydrogenase family. Type 1 subfamily.

It localises to the cytoplasm. The enzyme catalyses N-acetyl-L-glutamate 5-semialdehyde + phosphate + NADP(+) = N-acetyl-L-glutamyl 5-phosphate + NADPH + H(+). The protein operates within amino-acid biosynthesis; L-arginine biosynthesis; N(2)-acetyl-L-ornithine from L-glutamate: step 3/4. Its function is as follows. Catalyzes the NADPH-dependent reduction of N-acetyl-5-glutamyl phosphate to yield N-acetyl-L-glutamate 5-semialdehyde. The sequence is that of N-acetyl-gamma-glutamyl-phosphate reductase from Listeria monocytogenes serovar 1/2a (strain ATCC BAA-679 / EGD-e).